The chain runs to 356 residues: MAAAKPENLSLVVHGPGDLRLENYPIPEPGPNEVLLKMHSVGICGSDVHYWQHGRIGDFVVKKPMVLGHEASGTVVKVGSLVRHLQPGDRVAIEPGAPRETDEFCKIGRYNLSPTIFFCATPPDDGNLCRFYKHNANFCYKLPDNVTFEEGALIEPLSVGIHACRRAGVTLGNKVLVCGAGPIGLVSLLAAKAMGAAQVVVTDLSASRLSKAKEVGADFILQISNESPQEIAKKVEGLLGSKPEVTIECTGVETSIQAGIYATHSGGTLVLVGLGSEMTSVPLVHAATREVDIKGVFRYCNTWPMAISMLASKSVNVKPLVTHRFPLEKALEAFETSKKGLGLKVMIKCDPNDQNP.

Cys44 serves as a coordination point for Zn(2+). Tyr50 serves as a coordination point for substrate. 2 residues coordinate Zn(2+): His69 and Glu70. Residue Glu155 coordinates substrate. 3 residues coordinate NAD(+): Ile183, Asp203, and Arg208. Phosphoserine is present on residues Ser210 and Ser224. NAD(+) is bound by residues 272-274 (VGL) and 296-298 (VFR). Residues Arg298 and Tyr299 each contribute to the substrate site.

This sequence belongs to the zinc-containing alcohol dehydrogenase family. As to quaternary structure, homotetramer. The cofactor is Zn(2+). In terms of tissue distribution, expressed in lens.

The protein resides in the mitochondrion membrane. Its subcellular location is the cell projection. The protein localises to the cilium. It localises to the flagellum. It catalyses the reaction xylitol + NAD(+) = D-xylulose + NADH + H(+). It carries out the reaction keto-D-fructose + NADH + H(+) = D-sorbitol + NAD(+). The enzyme catalyses L-iditol + NAD(+) = keto-L-sorbose + NADH + H(+). Its activity is regulated as follows. Inhibited in vitro by metal chelators such as EDTA and 1,10-phenanthroline. Its function is as follows. Polyol dehydrogenase that catalyzes the reversible NAD(+)-dependent oxidation of various sugar alcohols. Is mostly active with xylitol, D-sorbitol (D-glucitol) and L-iditol as substrates, leading to the C2-oxidized products D-xylulose, D-fructose and L-sorbose, respectively. Is a key enzyme in the polyol pathway that interconverts glucose and fructose via sorbitol, which constitutes an important alternate route for glucose metabolism. May play a role in sperm motility by using sorbitol as an alternative energy source for sperm motility. Cannot use NADP(+) as the electron acceptor. Has no activity on ethanol, methanol, glycerol, galactitol and fructose 6-phosphate. The polypeptide is Sorbitol dehydrogenase (SORD) (Bos taurus (Bovine)).